The primary structure comprises 234 residues: L-cystine transport system permease protein TcyB (234 aa).

Transmembrane regions (helical) follow at residues 8–28 (ALTL…WPIL), 36–56 (IPLT…TALA), 78–98 (TPLL…NVTL), 100–120 (PFPS…SEII), and 199–219 (ILVI…LLSL). In terms of domain architecture, ABC transmembrane type-1 spans 32-221 (IYYTIPLTIL…IICFLLSLVQ (190 aa)).

The protein belongs to the binding-protein-dependent transport system permease family. In terms of assembly, the complex is composed of two ATP-binding proteins (TcyC), two transmembrane proteins (TcyB) and a solute-binding protein (TcyA).

It is found in the cell membrane. Part of the ABC transporter complex TcyABC involved in L-cystine import. Probably responsible for the translocation of the substrate across the membrane. The polypeptide is L-cystine transport system permease protein TcyB (tcyB) (Bacillus subtilis (strain 168)).